The primary structure comprises 212 residues: Dephospho-CoA kinase (212 aa).

One can recognise a DPCK domain in the interval 8–212; sequence LVGVTGGLGS…QLLQQAMLRR (205 aa). 16–21 provides a ligand contact to ATP; it reads GSGKSM.

Belongs to the CoaE family.

It is found in the cytoplasm. The enzyme catalyses 3'-dephospho-CoA + ATP = ADP + CoA + H(+). It participates in cofactor biosynthesis; coenzyme A biosynthesis; CoA from (R)-pantothenate: step 5/5. In terms of biological role, catalyzes the phosphorylation of the 3'-hydroxyl group of dephosphocoenzyme A to form coenzyme A. This chain is Dephospho-CoA kinase, found in Chlorobium chlorochromatii (strain CaD3).